We begin with the raw amino-acid sequence, 335 residues long: NADH-quinone oxidoreductase subunit H (335 aa).

8 helical membrane passes run 11-31, 81-101, 114-134, 154-174, 187-207, 238-258, 270-290, and 307-327; these read VILT…CGAL, VIFT…FVVI, IGLL…LFAG, VSYE…VGSF, LWFI…GVAV, FFVG…TLFF, QLSF…FILL, and WKFC…IVLY.

It belongs to the complex I subunit 1 family. NDH-1 is composed of 13 different subunits. Subunits NuoA, H, J, K, L, M, N constitute the membrane sector of the complex.

It is found in the cell inner membrane. It carries out the reaction a quinone + NADH + 5 H(+)(in) = a quinol + NAD(+) + 4 H(+)(out). NDH-1 shuttles electrons from NADH, via FMN and iron-sulfur (Fe-S) centers, to quinones in the respiratory chain. The immediate electron acceptor for the enzyme in this species is believed to be ubiquinone. Couples the redox reaction to proton translocation (for every two electrons transferred, four hydrogen ions are translocated across the cytoplasmic membrane), and thus conserves the redox energy in a proton gradient. This subunit may bind ubiquinone. The sequence is that of NADH-quinone oxidoreductase subunit H from Pseudomonas putida (strain ATCC 700007 / DSM 6899 / JCM 31910 / BCRC 17059 / LMG 24140 / F1).